The sequence spans 253 residues: NAD(P)H-quinone oxidoreductase subunit K (253 aa).

Residues C68, C69, C133, and C164 each contribute to the [4Fe-4S] cluster site.

Belongs to the complex I 20 kDa subunit family. In terms of assembly, NDH-1 can be composed of about 15 different subunits; different subcomplexes with different compositions have been identified which probably have different functions. Requires [4Fe-4S] cluster as cofactor.

It localises to the cellular thylakoid membrane. It catalyses the reaction a plastoquinone + NADH + (n+1) H(+)(in) = a plastoquinol + NAD(+) + n H(+)(out). It carries out the reaction a plastoquinone + NADPH + (n+1) H(+)(in) = a plastoquinol + NADP(+) + n H(+)(out). NDH-1 shuttles electrons from an unknown electron donor, via FMN and iron-sulfur (Fe-S) centers, to quinones in the respiratory and/or the photosynthetic chain. The immediate electron acceptor for the enzyme in this species is believed to be plastoquinone. Couples the redox reaction to proton translocation, and thus conserves the redox energy in a proton gradient. Cyanobacterial NDH-1 also plays a role in inorganic carbon-concentration. This chain is NAD(P)H-quinone oxidoreductase subunit K, found in Synechococcus sp. (strain CC9311).